The chain runs to 179 residues: Acireductone dioxygenase (179 aa).

The tract at residues 7–26 (MDDAPGDPRQPHRPDPGRPV) is disordered. H88, H90, E94, and H133 together coordinate Fe(2+). 4 residues coordinate Ni(2+): H88, H90, E94, and H133.

Belongs to the acireductone dioxygenase (ARD) family. Monomer. Interacts with MMP14. The cofactor is Fe(2+). It depends on Ni(2+) as a cofactor. Detected in heart, colon, lung, stomach, brain, spleen, liver, skeletal muscle and kidney.

It localises to the cytoplasm. The protein resides in the nucleus. Its subcellular location is the cell membrane. The catalysed reaction is 1,2-dihydroxy-5-(methylsulfanyl)pent-1-en-3-one + O2 = 4-methylsulfanyl-2-oxobutanoate + formate + 2 H(+). It catalyses the reaction 1,2-dihydroxy-5-(methylsulfanyl)pent-1-en-3-one + O2 = 3-(methylsulfanyl)propanoate + CO + formate + 2 H(+). It functions in the pathway amino-acid biosynthesis; L-methionine biosynthesis via salvage pathway; L-methionine from S-methyl-5-thio-alpha-D-ribose 1-phosphate: step 5/6. Its function is as follows. Catalyzes 2 different reactions between oxygen and the acireductone 1,2-dihydroxy-3-keto-5-methylthiopentene (DHK-MTPene) depending upon the metal bound in the active site. Fe-containing acireductone dioxygenase (Fe-ARD) produces formate and 2-keto-4-methylthiobutyrate (KMTB), the alpha-ketoacid precursor of methionine in the methionine recycle pathway. Ni-containing acireductone dioxygenase (Ni-ARD) produces methylthiopropionate, carbon monoxide and formate, and does not lie on the methionine recycle pathway. Also down-regulates cell migration mediated by MMP14. Necessary for hepatitis C virus replication in an otherwise non-permissive cell line. In Homo sapiens (Human), this protein is Acireductone dioxygenase.